The primary structure comprises 1216 residues: MGKLIRMGAQERRSLWPKRLHWSRPLFLLGMLIIGSTYQYLTSPQGLPTLWAAVSSQHPVKVASRDLSNKEMMMVSSETSKSSSEMEVEAWAPEATAGRDGTPPGIARKNTPSTPRGTASITPAIPNNYSPTPTGTGKVKEDTSATPSGVLNHYTQSRPMVNSYTRLTARGEVKSSRPTQSRGKEEKYSPSPLGRMVNSYAPSTLMTMPRSHGITPRTTVKDREIMATKKMLATNPSKRLVEKTTPTPLKGITDNTPTFLLSDLETDTLTSPRNVVEKKTLTTPRRVDSNSSTNHQGLVGKNNLTTPQGMVLEHTAAVSEGQVTISTMTRSSPTETKASTDAWKVRNPLPRTSAPIIRISSATFRGLLKNPSKAPSTPAAPRVRANPTIQVRHCLVVEPAPVAPTAPSPSWTTAVIPGIPSPSGQPDLYPKAEYPRDLFSVEERRQGWVVLHIFGMMYVFVALAIVCDEYFVPALGVITDKLQISEDVAGATFMAAGGSAPELFTSLIGVFISHSNVGIGTIVGSAVFNILFVIGTCALFSREILNLTWWPLFRDITFYIFDLMMLILFFLDSLIAWWESVLLLLAYAFYVFTMKWNQQLELWVKEQLNKRPVAKVMALGDLSKPGDGTVVVDEQQDNKKLKLSSMLTRGSSSASLHNSTIRSTIYQLMLHSLDPLGEARPSKDKEEETLIPEAKATPQAKAESKPEEEPAKLPEVTVTPAPAPDVKGDQEEDPGSQGVGAEAENTGERTGGEAEAPAEGENGERSGGDAALGGESEGKAENESEGDIPAERRGDDEDEGEIQAEGGEVKGDEDEGEIQAGEGGEVEGDEDEGEIQAGEGGEVEGDEDEGEIQAGEAGEVEGDEDEGEIQAGEGGEVEGDEDEGEIQAGEAGEVEGDEDEGEIQAGEGGEVKGDEGEIQAGEAGEVEGEDGEVEGGEDEGEIQAGEGGEGETGEQELNAEIQGEAKDDEEGVDGEGGGDGGDSEDEEEEDEEEEDEEEEEEEEEEEEEENEQPLSLEWPETRRKQAIYLFLLPIVFPLWLTVPDVRRLEAKKFFVITFLGSILWIAMFSYLMVWWAHQVGETIGISEEIMGLTILAAGTSIPDLITSVIVARKGLGDMAVSSSVGSNIFDITVGLPLPWMLFSLINGLQPVAVSSNGLFCAIVLLFLMLLFVISSIALCKWRMNKILGFTMFLLYFVFLIISVMLEDRIISCPVSV.

The Extracellular portion of the chain corresponds to 1-446; sequence MGKLIRMGAQ…DLFSVEERRQ (446 aa). The interval 94 to 196 is disordered; the sequence is EATAGRDGTP…KYSPSPLGRM (103 aa). 2 stretches are compositionally biased toward polar residues: residues 110-135 and 144-166; these read NTPS…TPTG and SATP…SYTR. Residues Asn290 and Asn303 are each glycosylated (N-linked (GlcNAc...) asparagine). The helical transmembrane segment at 447 to 467 threads the bilayer; sequence GWVVLHIFGMMYVFVALAIVC. Over 468-491 the chain is Cytoplasmic; that stretch reads DEYFVPALGVITDKLQISEDVAGA. An Alpha-1 repeat occupies 488–528; sequence VAGATFMAAGGSAPELFTSLIGVFISHSNVGIGTIVGSAVF. Residues 492 to 512 traverse the membrane as a helical segment; the sequence is TFMAAGGSAPELFTSLIGVFI. At 513-518 the chain is on the extracellular side; the sequence is SHSNVG. The chain crosses the membrane as a helical span at residues 519-539; that stretch reads IGTIVGSAVFNILFVIGTCAL. The Cytoplasmic portion of the chain corresponds to 540–557; it reads FSREILNLTWWPLFRDIT. The helical transmembrane segment at 558–578 threads the bilayer; sequence FYIFDLMMLILFFLDSLIAWW. A topological domain (extracellular) is located at residue Glu579. A helical membrane pass occupies residues 580 to 600; the sequence is SVLLLLAYAFYVFTMKWNQQL. At 601–1024 the chain is on the cytoplasmic side; the sequence is ELWVKEQLNK…SLEWPETRRK (424 aa). Phosphoserine is present on Ser652. Residues 677–1018 are disordered; the sequence is GEARPSKDKE…ENEQPLSLEW (342 aa). The segment covering 702–712 has biased composition (basic and acidic residues); the sequence is AESKPEEEPAK. Thr717 bears the Phosphothreonine mark. One copy of the 1; approximate repeat lies at 796–811; that stretch reads DEDEGEIQAEGGEVKG. Residues 796-928 are 8 X 17 AA tandem repeats of D-E-D-E-G-E-I-Q-A-G-E-[GA]-G-E-V-[EK]-G; it reads DEDEGEIQAE…QAGEAGEVEG (133 aa). 6 consecutive repeat copies span residues 812–828, 829–845, 846–862, 863–879, 880–896, and 897–913. Composition is skewed to acidic residues over residues 824 to 834, 841 to 851, 858 to 868, 875 to 885, 892 to 902, 924 to 941, and 981 to 1011; these read GEVEGDEDEGE, GEVE…DEGE, and GDSE…EENE. Residues 914–928 form an 8; approximate repeat; it reads DEGEIQAGEAGEVEG. The helical transmembrane segment at 1025 to 1045 threads the bilayer; the sequence is QAIYLFLLPIVFPLWLTVPDV. Topologically, residues 1046 to 1052 are extracellular; it reads RRLEAKK. A helical membrane pass occupies residues 1053 to 1073; sequence FFVITFLGSILWIAMFSYLMV. The Cytoplasmic portion of the chain corresponds to 1074-1088; it reads WWAHQVGETIGISEE. The helical transmembrane segment at 1089-1109 threads the bilayer; sequence IMGLTILAAGTSIPDLITSVI. The Alpha-2 repeat unit spans residues 1096–1127; sequence AAGTSIPDLITSVIVARKGLGDMAVSSSVGSN. Residues 1110–1127 lie on the Extracellular side of the membrane; the sequence is VARKGLGDMAVSSSVGSN. The helical transmembrane segment at 1128–1148 threads the bilayer; that stretch reads IFDITVGLPLPWMLFSLINGL. The Cytoplasmic portion of the chain corresponds to 1149 to 1157; the sequence is QPVAVSSNG. The chain crosses the membrane as a helical span at residues 1158–1178; it reads LFCAIVLLFLMLLFVISSIAL. The Extracellular segment spans residues 1179–1185; sequence CKWRMNK. Residues 1186–1206 traverse the membrane as a helical segment; the sequence is ILGFTMFLLYFVFLIISVMLE. At 1207 to 1216 the chain is on the cytoplasmic side; sequence DRIISCPVSV.

This sequence belongs to the Ca(2+):cation antiporter (CaCA) (TC 2.A.19) family. SLC24A subfamily. The uncleaved signal sequence is required for efficient membrane targeting and proper membrane integration and topology. In terms of processing, glycosylated. Retina.

The protein localises to the cell membrane. The catalysed reaction is Ca(2+)(out) + K(+)(out) + 4 Na(+)(in) = Ca(2+)(in) + K(+)(in) + 4 Na(+)(out). Calcium, potassium:sodium antiporter that transports 1 Ca(2+) and 1 K(+) in exchange for 4 Na(+). Critical component of the visual transduction cascade, controlling the calcium concentration of outer segments during light and darkness. Light causes a rapid lowering of cytosolic free calcium in the outer segment of both retinal rod and cone photoreceptors and the light-induced lowering of calcium is caused by extrusion via this protein which plays a key role in the process of light adaptation. In Bos taurus (Bovine), this protein is Sodium/potassium/calcium exchanger 1 (SLC24A1).